We begin with the raw amino-acid sequence, 1350 residues long: ABC transporter C family member 13 (1350 aa).

In terms of domain architecture, ABC transmembrane type-1 1 spans 107–390 (NKKSIFIVIL…LPEAIHNLLG (284 aa)). 4 consecutive transmembrane segments (helical) span residues 111 to 131 (IFIV…LKYF), 143 to 163 (TFLT…SYTL), 215 to 235 (IGLF…FPIQ), and 240 to 260 (LALL…VMII). Positions 462 to 481 (EKSEEEYETTTTTTDDNNNN) are disordered. Over residues 470–481 (TTTTTTDDNNNN) the composition is skewed to low complexity. The 221-residue stretch at 473 to 693 (TTTDDNNNNN…IDFESIMKTK (221 aa)) folds into the ABC transporter 1 domain. 505–512 (GVVGSGKT) is a binding site for ATP. An ABC transmembrane type-1 2 domain is found at 774 to 1061 (KHGSSTFFFI…FVELEVKMNS (288 aa)). The next 6 membrane-spanning stretches (helical) occupy residues 776 to 796 (GSST…QAIF), 816 to 836 (DSFY…TLVI), 887 to 907 (IDLL…TVVF), 909 to 929 (ICVM…LIIV), 1003 to 1023 (IGVR…FFSL), and 1029 to 1049 (GFSV…NWAV). The 235-residue stretch at 1103-1337 (IEFRDVEIRY…KNSKFSKLVK (235 aa)) folds into the ABC transporter 2 domain. 1137-1144 (GRTGAGKS) serves as a coordination point for ATP.

It belongs to the ABC transporter superfamily. ABCC family. Conjugate transporter (TC 3.A.1.208) subfamily.

It localises to the membrane. This Dictyostelium discoideum (Social amoeba) protein is ABC transporter C family member 13 (abcC13).